Reading from the N-terminus, the 188-residue chain is UPF0461 protein C5orf24 homolog (188 aa).

A Phosphoserine modification is found at Ser37. Lys75 participates in a covalent cross-link: Glycyl lysine isopeptide (Lys-Gly) (interchain with G-Cter in SUMO2). A disordered region spans residues 79–142 (KKKKNLNRSG…GYKVSPGRPP (64 aa)). Basic residues predominate over residues 80–92 (KKKNLNRSGKRGR). Residues 94–107 (SGTTKSAGYRTSTG) show a composition bias toward polar residues. Phosphoserine is present on residues Ser121 and Ser180. A Glycyl lysine isopeptide (Lys-Gly) (interchain with G-Cter in SUMO2) cross-link involves residue Lys184.

The protein belongs to the UPF0461 family.

This chain is UPF0461 protein C5orf24 homolog, found in Bos taurus (Bovine).